The following is a 487-amino-acid chain: ATP-dependent RNA helicase DBP3 (487 aa).

The segment at 1–40 (MAKRSRNMESNSERSSRPKKKSKGDAKPEQPPYVQSAELD) is disordered. The short motif at 71-98 (TAFSYLPSDSNQLYGPLEHFSKPTPIQS) is the Q motif element. Residues 101–276 (WPYLFAGRDV…TTFMKEPVTV (176 aa)) enclose the Helicase ATP-binding domain. 114 to 121 (AETGSGKT) serves as a coordination point for ATP. Residues 222–225 (DEAD) carry the DEAD box motif. In terms of domain architecture, Helicase C-terminal spans 291-456 (RIKQIVEVVK…DIPEALLKFG (166 aa)).

Belongs to the DEAD box helicase family. DDX5/DBP2 subfamily.

The protein resides in the nucleus. The protein localises to the nucleolus. It carries out the reaction ATP + H2O = ADP + phosphate + H(+). In terms of biological role, ATP-dependent RNA helicase required for 60S ribosomal subunit synthesis. Involved in efficient pre-rRNA processing, predominantly at site A3, which is necessary for the normal formation of 25S and 5.8S rRNAs. In Ajellomyces capsulatus (strain NAm1 / WU24) (Darling's disease fungus), this protein is ATP-dependent RNA helicase DBP3 (DBP3).